The following is a 529-amino-acid chain: DEP domain-containing protein 1B (529 aa).

In terms of domain architecture, DEP spans 24–108; it reads FRAKMPLRKH…DNRHLYRFPP (85 aa). Phosphoserine is present on S160. Residues 201-393 enclose the Rho-GAP domain; it reads DSLEEVLDVK…FLMDNYQEIL (193 aa). A Phosphoserine modification is found at S436.

This chain is DEP domain-containing protein 1B (DEPDC1B), found in Homo sapiens (Human).